A 368-amino-acid chain; its full sequence is MSSFKPTINRRQSTKIYVGNVPIGGDAPIAVQSMTNTRTTDIEATVAQIKALERVGADIVRISVPTMDAAEAFKSIKQQVNIPLVADIHFDYRIALKVAEYGVDCLRINPGNIGREDRIRAVVDCAKDKNIPIRIGVNAGSLEKDLQEKYGEPTPEALLESALRHVEILDRLNFDQFKVSVKASDVFLAVESYRLLAKAIKQPLHLGITEAGGARAGAVKSAVGLGMLLAEGIGDTLRVSLAADPVEEIKVGFDILKSLRIRSHGINFIACPTCSRQEFDVIGTVNALEQRLEDIVTPMDVSIIGCVVNGPGEALISDLGVTGGNKKSGYYLDGKRQKERFDNEDLINQLEAKIRAKVAQQDPKNRII.

Residues cysteine 271, cysteine 274, cysteine 306, and glutamate 313 each contribute to the [4Fe-4S] cluster site.

Belongs to the IspG family. [4Fe-4S] cluster is required as a cofactor.

It catalyses the reaction (2E)-4-hydroxy-3-methylbut-2-enyl diphosphate + oxidized [flavodoxin] + H2O + 2 H(+) = 2-C-methyl-D-erythritol 2,4-cyclic diphosphate + reduced [flavodoxin]. It functions in the pathway isoprenoid biosynthesis; isopentenyl diphosphate biosynthesis via DXP pathway; isopentenyl diphosphate from 1-deoxy-D-xylulose 5-phosphate: step 5/6. Its function is as follows. Converts 2C-methyl-D-erythritol 2,4-cyclodiphosphate (ME-2,4cPP) into 1-hydroxy-2-methyl-2-(E)-butenyl 4-diphosphate. This Histophilus somni (strain 129Pt) (Haemophilus somnus) protein is 4-hydroxy-3-methylbut-2-en-1-yl diphosphate synthase (flavodoxin).